The following is a 194-amino-acid chain: Imidazoleglycerol-phosphate dehydratase (194 aa).

The protein belongs to the imidazoleglycerol-phosphate dehydratase family.

It is found in the cytoplasm. The catalysed reaction is D-erythro-1-(imidazol-4-yl)glycerol 3-phosphate = 3-(imidazol-4-yl)-2-oxopropyl phosphate + H2O. The protein operates within amino-acid biosynthesis; L-histidine biosynthesis; L-histidine from 5-phospho-alpha-D-ribose 1-diphosphate: step 6/9. The protein is Imidazoleglycerol-phosphate dehydratase of Bacillus cereus (strain B4264).